A 273-amino-acid polypeptide reads, in one-letter code: 3-methyl-2-oxobutanoate hydroxymethyltransferase (273 aa).

2 residues coordinate Mg(2+): Asp53 and Asp92. Residues 53 to 54 (DS), Asp92, and Lys122 each bind 3-methyl-2-oxobutanoate. Glu124 is a binding site for Mg(2+). Catalysis depends on Glu191, which acts as the Proton acceptor.

It belongs to the PanB family. As to quaternary structure, homodecamer; pentamer of dimers. Mg(2+) is required as a cofactor.

The protein localises to the cytoplasm. The enzyme catalyses 3-methyl-2-oxobutanoate + (6R)-5,10-methylene-5,6,7,8-tetrahydrofolate + H2O = 2-dehydropantoate + (6S)-5,6,7,8-tetrahydrofolate. It functions in the pathway cofactor biosynthesis; (R)-pantothenate biosynthesis; (R)-pantoate from 3-methyl-2-oxobutanoate: step 1/2. Its function is as follows. Catalyzes the reversible reaction in which hydroxymethyl group from 5,10-methylenetetrahydrofolate is transferred onto alpha-ketoisovalerate to form ketopantoate. The chain is 3-methyl-2-oxobutanoate hydroxymethyltransferase from Bacteroides fragilis (strain ATCC 25285 / DSM 2151 / CCUG 4856 / JCM 11019 / LMG 10263 / NCTC 9343 / Onslow / VPI 2553 / EN-2).